Here is a 282-residue protein sequence, read N- to C-terminus: Flagellin (282 aa).

It belongs to the bacterial flagellin family.

Its subcellular location is the secreted. The protein resides in the bacterial flagellum. Flagellin is the subunit protein which polymerizes to form the filaments of bacterial flagella. The flagellum is required to cause a persistent disease in a murine model of infection. This chain is Flagellin (fliC), found in Brucella melitensis biotype 1 (strain ATCC 23456 / CCUG 17765 / NCTC 10094 / 16M).